The following is a 215-amino-acid chain: Adenylate kinase (215 aa).

Residue 10–15 (GAGKGT) participates in ATP binding. The segment at 30 to 59 (STGDMLRAAVKAGSPLGQQVKGVMDSGGLV) is NMP. Residues Thr31, Arg36, 57 to 59 (GLV), 85 to 88 (GFPR), and Gln92 each bind AMP. The interval 122–159 (GRRVHPASGRVYHTEHNPPKVAGKDDVTGEDLIQREDD) is LID. ATP-binding positions include Arg123 and 132–133 (VY). AMP contacts are provided by Arg156 and Arg167. ATP is bound at residue Gly201.

Belongs to the adenylate kinase family. In terms of assembly, monomer.

The protein localises to the cytoplasm. The enzyme catalyses AMP + ATP = 2 ADP. It participates in purine metabolism; AMP biosynthesis via salvage pathway; AMP from ADP: step 1/1. In terms of biological role, catalyzes the reversible transfer of the terminal phosphate group between ATP and AMP. Plays an important role in cellular energy homeostasis and in adenine nucleotide metabolism. In Pseudomonas paraeruginosa (strain DSM 24068 / PA7) (Pseudomonas aeruginosa (strain PA7)), this protein is Adenylate kinase.